Here is a 510-residue protein sequence, read N- to C-terminus: Glutamate--tRNA ligase (510 aa).

The short motif at 15 to 25 (PSPTGDPHVGT) is the 'HIGH' region element. The short motif at 256-260 (KISKR) is the 'KMSKS' region element. Position 259 (K259) interacts with ATP.

It belongs to the class-I aminoacyl-tRNA synthetase family. Glutamate--tRNA ligase type 1 subfamily. As to quaternary structure, monomer.

The protein resides in the cytoplasm. The enzyme catalyses tRNA(Glu) + L-glutamate + ATP = L-glutamyl-tRNA(Glu) + AMP + diphosphate. Its function is as follows. Catalyzes the attachment of glutamate to tRNA(Glu) in a two-step reaction: glutamate is first activated by ATP to form Glu-AMP and then transferred to the acceptor end of tRNA(Glu). The protein is Glutamate--tRNA ligase of Fusobacterium nucleatum subsp. nucleatum (strain ATCC 25586 / DSM 15643 / BCRC 10681 / CIP 101130 / JCM 8532 / KCTC 2640 / LMG 13131 / VPI 4355).